We begin with the raw amino-acid sequence, 425 residues long: Adenosylhomocysteinase (425 aa).

Substrate is bound by residues Thr-60, Asp-132, and Glu-157. Thr-158–Thr-160 contacts NAD(+). Substrate is bound by residues Lys-187 and Asp-191. Residues Asn-192, Gly-221 to Gly-226, Glu-244, Asn-279, Ser-300 to His-302, and Asn-347 each bind NAD(+).

The protein belongs to the adenosylhomocysteinase family. It depends on NAD(+) as a cofactor.

It localises to the cytoplasm. The enzyme catalyses S-adenosyl-L-homocysteine + H2O = L-homocysteine + adenosine. It functions in the pathway amino-acid biosynthesis; L-homocysteine biosynthesis; L-homocysteine from S-adenosyl-L-homocysteine: step 1/1. Functionally, may play a key role in the regulation of the intracellular concentration of adenosylhomocysteine. In Synechocystis sp. (strain ATCC 27184 / PCC 6803 / Kazusa), this protein is Adenosylhomocysteinase.